The chain runs to 248 residues: Transcription factor cicD (248 aa).

Over residues 1-22 (MVGSRHPDQCAKRWHHSLDPNV) the composition is skewed to basic and acidic residues. Residues 1–25 (MVGSRHPDQCAKRWHHSLDPNVKRG) are disordered. Residues 19–74 (DPNVKRGPWTMEEDSSLLEAVQKIGRDWKEIGRELFPSRSTTDIKNRYVILSRRRG) form the HTH myb-type domain. The H-T-H motif DNA-binding region spans 46 to 70 (WKEIGRELFPSRSTTDIKNRYVILS). The interval 186 to 208 (SELEGSFTSRNHEEPPQPLPVPD) is disordered.

It is found in the nucleus. Transcription factor that regulates the expression of the gene cluster that mediates the biosynthesis of cichorine, a phytotoxin active against knapweed, corn, and soybeans. The sequence is that of Transcription factor cicD from Emericella nidulans (strain FGSC A4 / ATCC 38163 / CBS 112.46 / NRRL 194 / M139) (Aspergillus nidulans).